Here is a 350-residue protein sequence, read N- to C-terminus: Zona pellucida-binding protein 1 (350 aa).

Positions 1 to 44 are cleaved as a signal peptide; sequence MEALAPGRAPRGRRRAGASGSVLSPLSLAAVLLCALLRAPPAVG. Residues Asn-113, Asn-186, and Asn-339 are each glycosylated (N-linked (GlcNAc...) asparagine).

Belongs to the zona pellucida-binding protein Sp38 family. In terms of processing, N-glycosylated. Expressed in testis (at protein level). Expressed in male germ cells.

The protein resides in the cytoplasmic vesicle. It localises to the secretory vesicle. It is found in the acrosome. Its subcellular location is the acrosome membrane. The protein localises to the secreted. Plays a role in acrosome compaction and sperm morphogenesis. Is implicated in sperm-oocyte interaction during fertilization. The chain is Zona pellucida-binding protein 1 (Zpbp) from Mus musculus (Mouse).